We begin with the raw amino-acid sequence, 1717 residues long: PH domain leucine-rich repeat-containing protein phosphatase 1 (1717 aa).

Position 1 is an N-acetylmethionine (Met-1). 4 disordered regions span residues 1-25 (MEPA…SAPA), 41-118 (LAAA…GANS), 136-156 (AASS…GAAG), and 252-470 (PGAA…PPPT). Over residues 98–110 (APQPIAGGAAPVP) the composition is skewed to low complexity. The span at 262-274 (EPPPEAGPRLAPP) shows a compositional bias: pro residues. Low complexity-rich tracts occupy residues 313 to 325 (SRRA…DSSP) and 333 to 345 (PVSS…PVVS). At Ser-317 the chain carries Phosphoserine. Polar residues-rich tracts occupy residues 346-358 (DTES…SAES) and 408-417 (QTASSPQPQQ). Residue Ser-412 is modified to Phosphoserine. In terms of domain architecture, PH spans 536 to 636 (RIQLSGMYNV…WLRQVSKVAS (101 aa)). 21 LRR repeats span residues 638–659 (RISS…LFYS), 661–682 (DLTH…PAAR), 692–712 (KLKS…AVCS), 715–736 (TLAE…VGVM), 738–760 (NLQT…ENMK), 761–783 (QLSY…EKLT), 784–804 (AVDK…QALR), 808–831 (HIKH…DFLQ), 832–853 (HVTQ…IFNN), 873–894 (FLKA…PVPN), 895–916 (YLSY…VCES), 918–939 (KLEV…LFCN), 941–962 (SLRK…LERT), 963–984 (SVEV…LLMK), 987–1008 (SLRF…TLSE), 1013–1033 (ILQE…PLLT), 1037–1058 (HLKI…KMAK), 1061–1082 (ELEE…IMNC), 1084–1105 (RMHT…MQLP), 1106–1127 (EIKC…ENLP), and 1129–1150 (KLQE…TLEL). The interval 1076–1205 (PTTIMNCRRM…NNFCDNREAL (130 aa)) is interaction with NHERF1. Positions 1175 to 1422 (SHGYTEASGV…DSISAVVVQL (248 aa)) constitute a PPM-type phosphatase domain. Residues Asp-1210, Gly-1211, Lys-1374, and Asp-1413 each contribute to the Mn(2+) site. Disordered stretches follow at residues 1458-1510 (DRPS…SPAY) and 1673-1717 (EVKE…DTPL). Residues 1468 to 1489 (SSSSGMASEISSELSTSEMSSE) show a composition bias toward low complexity. The short motif at 1715-1717 (TPL) is the PDZ-binding; required for interaction with NHERF1 element.

In terms of assembly, interacts with the nucleotide free form of K-Ras (KRAS) via its LRR repeats. Interacts with AKT2, AKT3, PRKCB isoform beta-II, STK4, RPS6KB1, RAF1. Isoform 1 (predominantly) and isoform 2 interact with BRAP. Interacts with FKBP5; FKBP5 acts as a scaffold for PHLPP1 and Akt. Interacts with SCRIB; SCRIB acts as a scaffold for PHLPP1 and Akt. Interacts with NHERF1; NHERF1 scaffolds a heterotrimeric complex with PTEN at the plasma membrane. Interacts with WDR48 and USP12. The cofactor is Mn(2+). In terms of tissue distribution, in colorectal cancer tissue, expression is highest in the surface epithelium of normal colonic mucosa adjacent to the cancer tissue but is largely excluded from the crypt bases. Expression is lost or significantly decreased in 78% of tested tumors (at protein level). Ubiquitously expressed in non-cancerous tissues.

The protein localises to the cytoplasm. The protein resides in the membrane. It localises to the nucleus. It is found in the cell membrane. The enzyme catalyses O-phospho-L-seryl-[protein] + H2O = L-seryl-[protein] + phosphate. It catalyses the reaction O-phospho-L-threonyl-[protein] + H2O = L-threonyl-[protein] + phosphate. Insensitive to okadaic acid. Deubiquitination by WDR48-USP12 complex positively regulates PHLPP1 stability. Functionally, protein phosphatase involved in regulation of Akt and PKC signaling. Mediates dephosphorylation in the C-terminal domain hydrophobic motif of members of the AGC Ser/Thr protein kinase family; specifically acts on 'Ser-473' of AKT2 and AKT3, 'Ser-660' of PRKCB and 'Ser-657' of PRKCA. Isoform 2 seems to have a major role in regulating Akt signaling in hippocampal neurons. Akt regulates the balance between cell survival and apoptosis through a cascade that primarily alters the function of transcription factors that regulate pro- and antiapoptotic genes. Dephosphorylation of 'Ser-473' of Akt triggers apoptosis and suppression of tumor growth. Dephosphorylation of PRKCA and PRKCB leads to their destabilization and degradation. Dephosphorylates STK4 on 'Thr-387' leading to STK4 activation and apoptosis. Dephosphorylates RPS6KB1 and is involved in regulation of cap-dependent translation. Inhibits cancer cell proliferation and may act as a tumor suppressor. Dephosphorylates RAF1 inhibiting its kinase activity. May act as a negative regulator of K-Ras signaling in membrane rafts. Involved in the hippocampus-dependent long-term memory formation. Involved in circadian control by regulating the consolidation of circadian periodicity after resetting. Involved in development and function of regulatory T-cells. In Homo sapiens (Human), this protein is PH domain leucine-rich repeat-containing protein phosphatase 1 (PHLPP1).